Consider the following 393-residue polypeptide: Chorismate synthase (393 aa).

2 residues coordinate NADP(+): arginine 40 and arginine 46. FMN is bound by residues arginine 135–serine 137, glutamine 257–alanine 258, glycine 301, lysine 316–threonine 320, and arginine 342. The segment at aspartate 280–glycine 306 is disordered.

The protein belongs to the chorismate synthase family. In terms of assembly, homotetramer. The cofactor is FMNH2.

It carries out the reaction 5-O-(1-carboxyvinyl)-3-phosphoshikimate = chorismate + phosphate. The protein operates within metabolic intermediate biosynthesis; chorismate biosynthesis; chorismate from D-erythrose 4-phosphate and phosphoenolpyruvate: step 7/7. Functionally, catalyzes the anti-1,4-elimination of the C-3 phosphate and the C-6 proR hydrogen from 5-enolpyruvylshikimate-3-phosphate (EPSP) to yield chorismate, which is the branch point compound that serves as the starting substrate for the three terminal pathways of aromatic amino acid biosynthesis. This reaction introduces a second double bond into the aromatic ring system. This Thermobifida fusca (strain YX) protein is Chorismate synthase.